We begin with the raw amino-acid sequence, 469 residues long: Alpha,alpha-trehalose-phosphate synthase [UDP-forming] (469 aa).

Residues Y87 and D141 each coordinate D-glucose 6-phosphate. Residues R279 and K284 each coordinate UDP. Positions 279 and 284 each coordinate UDP-alpha-D-glucose. R317 provides a ligand contact to D-glucose 6-phosphate. 378–386 (DGMNLVSYE) is a UDP-alpha-D-glucose binding site. UDP is bound at residue 382-386 (LVSYE).

It belongs to the glycosyltransferase 20 family.

It catalyses the reaction D-glucose 6-phosphate + UDP-alpha-D-glucose = alpha,alpha-trehalose 6-phosphate + UDP + H(+). It participates in carbohydrate biosynthesis. Synthase catalytic subunit of the trehalose synthase complex that catalyzes the production of trehalose from glucose-6-phosphate and UDP-alpha-D-glucose in a two step process. The disaccharide trehalose serves as a storage carbohydrate that is mobilized during spore germination. The polypeptide is Alpha,alpha-trehalose-phosphate synthase [UDP-forming] (Yarrowia lipolytica (strain CLIB 122 / E 150) (Yeast)).